Reading from the N-terminus, the 608-residue chain is Elongation factor 4 (608 aa).

A tr-type G domain is found at 11-193 (DHIRNFSIVA…AIVNRLPPPK (183 aa)). Residues 23–28 (DHGKST) and 140–143 (NKID) contribute to the GTP site.

This sequence belongs to the TRAFAC class translation factor GTPase superfamily. Classic translation factor GTPase family. LepA subfamily.

It is found in the cell inner membrane. It carries out the reaction GTP + H2O = GDP + phosphate + H(+). Required for accurate and efficient protein synthesis under certain stress conditions. May act as a fidelity factor of the translation reaction, by catalyzing a one-codon backward translocation of tRNAs on improperly translocated ribosomes. Back-translocation proceeds from a post-translocation (POST) complex to a pre-translocation (PRE) complex, thus giving elongation factor G a second chance to translocate the tRNAs correctly. Binds to ribosomes in a GTP-dependent manner. The polypeptide is Elongation factor 4 (Agrobacterium fabrum (strain C58 / ATCC 33970) (Agrobacterium tumefaciens (strain C58))).